The chain runs to 109 residues: Large ribosomal subunit protein eL30A (109 aa).

Belongs to the eukaryotic ribosomal protein eL30 family. As to quaternary structure, component of the large ribosomal subunit (LSU). Mature yeast ribosomes consist of a small (40S) and a large (60S) subunit. The 40S small subunit contains 1 molecule of ribosomal RNA (18S rRNA) and at least 33 different proteins. The large 60S subunit contains 3 rRNA molecules (25S, 5.8S and 5S rRNA) and at least 46 different proteins.

It is found in the cytoplasm. Component of the ribosome, a large ribonucleoprotein complex responsible for the synthesis of proteins in the cell. The small ribosomal subunit (SSU) binds messenger RNAs (mRNAs) and translates the encoded message by selecting cognate aminoacyl-transfer RNA (tRNA) molecules. The large subunit (LSU) contains the ribosomal catalytic site termed the peptidyl transferase center (PTC), which catalyzes the formation of peptide bonds, thereby polymerizing the amino acids delivered by tRNAs into a polypeptide chain. The nascent polypeptides leave the ribosome through a tunnel in the LSU and interact with protein factors that function in enzymatic processing, targeting, and the membrane insertion of nascent chains at the exit of the ribosomal tunnel. The protein is Large ribosomal subunit protein eL30A (rpl3001) of Schizosaccharomyces pombe (strain 972 / ATCC 24843) (Fission yeast).